A 696-amino-acid polypeptide reads, in one-letter code: Interleukin-1 receptor accessory protein-like 1 (696 aa).

An N-terminal signal peptide occupies residues 1–18 (MKAPIPHLILLYATFTQS). The Ig-like C2-type 1 domain maps to 19–134 (LKVVTKRGSA…YCMKVSISLT (116 aa)). The Extracellular portion of the chain corresponds to 19–357 (LKVVTKRGSA…LLHKRELMYT (339 aa)). Disulfide bonds link Cys31–Cys126 and Cys53–Cys118. Residues Asn63, Asn122, and Asn138 are each glycosylated (N-linked (GlcNAc...) asparagine). 2 disulfide bridges follow: Cys143-Cys185 and Cys164-Cys216. Ig-like C2-type domains follow at residues 143 to 232 (CYNS…TELT) and 242 to 350 (PKLL…VLLH). N-linked (GlcNAc...) asparagine glycosylation is found at Asn213, Asn264, and Asn331. A disulfide bridge links Cys267 with Cys334. Residues 358 to 378 (VELAGGLGAILLLLVCLVTIY) traverse the membrane as a helical segment. The Cytoplasmic segment spans residues 379 to 696 (KCYKIEIMLF…RETSISSVIW (318 aa)). The region spanning 403 to 559 (KDYDAYLSYT…KFWKRLQYEM (157 aa)) is the TIR domain. The active site involves Glu491. Residues 549–644 (SKFWKRLQYE…TGTLPLTSIG (96 aa)) form an interaction with NCS1 region. The tract at residues 659 to 680 (GQRPQTKSSREQNPDEAHTNSA) is disordered. The span at 666–676 (SSREQNPDEAH) shows a compositional bias: basic and acidic residues.

It belongs to the interleukin-1 receptor family. Homodimer. Interacts (calcium-independent) with NCS1. Interacts (via the first immunoglobilin domain) with PTPRD (via the second immunoglobilin domain); this interaction is PTPRD-splicing-dependent and induces pre- and post-synaptic differentiation of neurons and is required for IL1RAPL1-mediated synapse formation. In terms of tissue distribution, detected at low levels in heart, skeletal muscle, ovary, skin, amygdala, caudate nucleus, corpus callosum, hippocampus, substantia nigra and thalamus. Detected at very low levels in tonsil, prostate, testis, small intestine, placenta, colon and fetal liver.

The protein localises to the cell membrane. Its subcellular location is the cytoplasm. It localises to the cell projection. It is found in the axon. The protein resides in the dendrite. It catalyses the reaction NAD(+) + H2O = ADP-D-ribose + nicotinamide + H(+). In terms of biological role, may regulate secretion and presynaptic differentiation through inhibition of the activity of N-type voltage-gated calcium channel. May activate the MAP kinase JNK. Plays a role in neurite outgrowth. During dendritic spine formation can bidirectionally induce pre- and post-synaptic differentiation of neurons by trans-synaptically binding to PTPRD. The polypeptide is Interleukin-1 receptor accessory protein-like 1 (IL1RAPL1) (Homo sapiens (Human)).